The sequence spans 71 residues: QDLPPLDPSAEQAQALNYVKDTAEAADHPAHQEGEQCDNCMFFQADSQGCQLFPQNSVEPAGWCQSWTAQN.

The residue at position 1 (glutamine 1) is a Pyrrolidone carboxylic acid. Residues cysteine 37, cysteine 40, cysteine 50, and cysteine 64 each coordinate [4Fe-4S] cluster.

This sequence belongs to the high-potential iron-sulfur protein (HiPIP) family. Homodimer.

Specific class of high-redox-potential 4Fe-4S ferredoxins. Functions in anaerobic electron transport in most purple and in some other photosynthetic bacteria and in at least one genus (Paracoccus) of halophilic, denitrifying bacteria. This is High-potential iron-sulfur protein (hip) from Halomonas halodenitrificans (strain ATCC 12084 / NCIMB 8669) (Paracoccus halodenitrificans).